The chain runs to 523 residues: Calcium uptake protein 3, mitochondrial (523 aa).

A mitochondrion-targeting transit peptide spans 1–6; sequence MAALRR. The EF-hand 1 domain maps to 226–261; it reads PHAGFRIAFNMFDTDGNEMVDKKEFLVLQEIFRKKN. Residues aspartate 238, aspartate 240, asparagine 242, methionine 244, aspartate 246, and glutamate 249 each contribute to the Ca(2+) site. The EF-hand 2; degenerate domain maps to 395–430; sequence ENTSVFLENVRYSISEEKGITFDEFRSFFQFLNNLE. An EF-hand 3 domain is found at 464 to 499; the sequence is SPHLVNTVFKIFDVDKDDQLSYKEFIGIMKDRLHRG. The Ca(2+) site is built by aspartate 476, aspartate 478, aspartate 480, glutamine 482, and glutamate 487.

Belongs to the MICU1 family. MICU3 subfamily. Heterodimer; disulfide-linked; heterodimerizes with MICU1. Heterodimerizes with isoform 3 of MICU1 (MICU1.1) in skeletal muscle. Component of the uniplex complex, composed of MCU, EMRE/SMDT1, MICU1 and MICU3 in a 4:4:1:1 stoichiometry. In terms of tissue distribution, predominantly expressed in skeletal muscle and central nervous system.

The protein localises to the mitochondrion intermembrane space. It is found in the mitochondrion inner membrane. Functionally, tissue-specific calcium sensor of the mitochondrial calcium uniporter (MCU) channel, which specifically regulates MCU channel activity in the central nervous system and skeletal muscle. Senses calcium level via its EF-hand domains: compared to MICU1 and MICU2, MICU3 has a higher affinity for calcium. MICU1 and MICU3 form a disulfide-linked heterodimer that stimulates and inhibits MCU activity, depending on the concentration of calcium. At low calcium levels, MICU1 occludes the pore of the MCU channel, preventing mitochondrial calcium uptake. At higher calcium levels, calcium-binding to MICU1 and MICU3 induces a conformational change that weakens MCU-MICU1 interactions and moves the MICU1-MICU3 heterodimer away from the pore, allowing calcium permeation through the MCU channel. The high calcium affinity of MICU3 lowers the calcium threshold necessary for calcium permeation through the MCU channel. The MICU1-MICU3 heterodimer promotes flexibility of neurotransmission in neuronal cells by enhancing mitochondrial calcium uptake in presynapses. It is also required to increase mitochondrial calcium uptake in skeletal muscle cells, thereby increasing ATP production. This Mus musculus (Mouse) protein is Calcium uptake protein 3, mitochondrial.